The sequence spans 361 residues: Alanine racemase 2 (361 aa).

The active-site Proton acceptor; specific for D-alanine is Lys-30. Lys-30 carries the N6-(pyridoxal phosphate)lysine modification. Arg-122 is a substrate binding site. The active-site Proton acceptor; specific for L-alanine is the Tyr-256. Position 303 (Met-303) interacts with substrate.

It belongs to the alanine racemase family. Pyridoxal 5'-phosphate serves as cofactor.

The enzyme catalyses L-alanine = D-alanine. It participates in amino-acid biosynthesis; D-alanine biosynthesis; D-alanine from L-alanine: step 1/1. Catalyzes the interconversion of L-alanine and D-alanine. May also act on other amino acids. The polypeptide is Alanine racemase 2 (alr2) (Staphylococcus aureus (strain Mu50 / ATCC 700699)).